A 268-amino-acid polypeptide reads, in one-letter code: Interleukin-1 alpha (268 aa).

The propeptide occupies 1–112 (MAKVPDLFED…DTEEEIIKPR (112 aa)). Lys82 is subject to N6-acetyllysine. The nuclear localization signal (NLS) stretch occupies residues 82–86 (KKRRL). Ser87 is subject to Phosphoserine. 2 N-linked (GlcNAc...) asparagine glycosylation sites follow: Asn102 and Asn141.

The protein belongs to the IL-1 family. As to quaternary structure, monomer. Interacts with TMED10; the interaction mediates the translocation from the cytoplasm into the ERGIC (endoplasmic reticulum-Golgi intermediate compartment) and thereby secretion. Interacts with IL1R1. Interacts with S100A13; this interaction is the first step in the export of IL1A, followed by direct translocation of this complex across the plasma membrane. In terms of processing, acetylated within its nuclear localization sequence, which impacts subcellular localization. Post-translationally, proteolytic processed by CAPN1 in a calcium-dependent manner. Cleavage from 31 kDa precursor to 18 kDa biologically active molecules. Phosphorylated. Phosphorylation greatly enhances susceptibility to digestion and promotes the conversion of pre-IL1A alpha to the biologically active IL1A.

It localises to the nucleus. It is found in the cytoplasm. The protein resides in the secreted. Functionally, cytokine constitutively present intracellularly in nearly all resting non-hematopoietic cells that plays an important role in inflammation and bridges the innate and adaptive immune systems. After binding to its receptor IL1R1 together with its accessory protein IL1RAP, forms the high affinity interleukin-1 receptor complex. Signaling involves the recruitment of adapter molecules such as MYD88, IRAK1 or IRAK4. In turn, mediates the activation of NF-kappa-B and the three MAPK pathways p38, p42/p44 and JNK pathways. Within the cell, acts as an alarmin and cell death results in its liberation in the extracellular space after disruption of the cell membrane to induce inflammation and alert the host to injury or damage. In addition to its role as a danger signal, which occurs when the cytokine is passively released by cell necrosis, directly senses DNA damage and acts as signal for genotoxic stress without loss of cell integrity. The polypeptide is Interleukin-1 alpha (IL1A) (Capra hircus (Goat)).